The primary structure comprises 298 residues: ADP/ATP translocase 2 (298 aa).

The residue at position 1 (Met1) is an N-acetylmethionine. Residues 1 to 7 (MTDAAVS) lie on the Mitochondrial intermembrane side of the membrane. Thr2 carries the post-translational modification N-acetylthreonine; in ADP/ATP translocase 2, N-terminally processed. Residues 6–98 (VSFAKDFLAG…FAFKDKYKQI (93 aa)) form a Solcar 1 repeat. Ser7 carries the post-translational modification Phosphoserine. Residues 8 to 37 (FAKDFLAGGVAAAISKTAVAPIERVKLLLQ) form a helical membrane-spanning segment. Lys23 bears the N6-malonyllysine mark. Topologically, residues 38–74 (VQHASKQITADKQYKGIIDCVVRIPKEQGVLSFWRGN) are mitochondrial matrix. Residue Lys43 is modified to N6-succinyllysine. Lys52 bears the N6,N6,N6-trimethyllysine; alternate mark. An N6,N6-dimethyllysine; alternate modification is found at Lys52. Lys52 bears the N6-methyllysine; alternate mark. A helical membrane pass occupies residues 75-99 (LANVIRYFPTQALNFAFKDKYKQIF). The ADP site is built by Arg80 and Lys92. N6-malonyllysine is present on residues Lys92 and Lys96. At 100–109 (LGGVDKRTQF) the chain is on the mitochondrial intermembrane side. Position 105 is an N6-acetyllysine; alternate (Lys105). Residue Lys105 is modified to N6-succinyllysine; alternate. Residues 110–130 (WRYFAGNLASGGAAGATSLCF) form a helical membrane-spanning segment. Solcar repeat units lie at residues 111–201 (RYFA…AKGM) and 212–297 (ISWM…IKKY). The Mitochondrial matrix segment spans residues 131–178 (VYPLDFARTRLAADVGKAGAEREFKGLGDCLVKIYKSDGIKGLYQGFN). At Lys147 the chain carries N6-methyllysine; alternate. Residues Lys147 and Lys155 each carry the N6-acetyllysine; alternate modification. N6-succinyllysine; alternate occurs at positions 147 and 155. The residue at position 147 (Lys147) is an N6-malonyllysine; alternate. 2 positions are modified to N6-acetyllysine: Lys163 and Lys166. A helical membrane pass occupies residues 179–199 (VSVQGIIIYRAAYFGIYDTAK). Over 200–210 (GMLPDPKNTHI) the chain is Mitochondrial intermembrane. Residues 211-231 (FISWMIAQSVTAVAGLTSYPF) traverse the membrane as a helical segment. Topologically, residues 232 to 273 (DTVRRRMMMQSGRKGTDIMYTGTLDCWRKIARDEGGKAFFKG) are mitochondrial matrix. ADP is bound at residue Arg235. The segment at 235–240 (RRRMMM) is important for transport activity. The Nucleotide carrier signature motif signature appears at 235 to 240 (RRRMMM). Lys268 carries the N6-acetyllysine; alternate modification. Lys268 bears the N6-succinyllysine; alternate mark. The chain crosses the membrane as a helical span at residues 274 to 291 (AWSNVLRGMGGAFVLVLY). The Mitochondrial intermembrane portion of the chain corresponds to 292–298 (DEIKKYT).

This sequence belongs to the mitochondrial carrier (TC 2.A.29) family. In terms of assembly, monomer. Component of the MMXD complex, which includes CIAO1, ERCC2, CIAO2B, MMS19 and SLC25A5/ANT2. Interacts with AK4. Interacts with TIMM44; leading to inhibit the presequence translocase TIMM23, thereby promoting stabilization of PINK1. Trimethylated by ANTKMT at Lys-52. As to expression, present in kidney, brain, heart, liver and skeletal muscle.

The protein localises to the mitochondrion inner membrane. It is found in the membrane. It catalyses the reaction ADP(in) + ATP(out) = ADP(out) + ATP(in). The catalysed reaction is H(+)(in) = H(+)(out). Its activity is regulated as follows. The matrix-open state (m-state) is inhibited by the membrane-permeable bongkrekic acid (BKA). The cytoplasmic-open state (c-state) is inhibited by the membrane-impermeable toxic inhibitor carboxyatractyloside (CATR). Proton transporter activity is inhibited by ADP:ATP antiporter activity. Its function is as follows. ADP:ATP antiporter that mediates import of ADP into the mitochondrial matrix for ATP synthesis, and export of ATP out to fuel the cell. Cycles between the cytoplasmic-open state (c-state) and the matrix-open state (m-state): operates by the alternating access mechanism with a single substrate-binding site intermittently exposed to either the cytosolic (c-state) or matrix (m-state) side of the inner mitochondrial membrane. In addition to its ADP:ATP antiporter activity, also involved in mitochondrial uncoupling and mitochondrial permeability transition pore (mPTP) activity. Plays a role in mitochondrial uncoupling by acting as a proton transporter: proton transport uncouples the proton flows via the electron transport chain and ATP synthase to reduce the efficiency of ATP production and cause mitochondrial thermogenesis. Proton transporter activity is inhibited by ADP:ATP antiporter activity, suggesting that SLC25A5/ANT2 acts as a master regulator of mitochondrial energy output by maintaining a delicate balance between ATP production (ADP:ATP antiporter activity) and thermogenesis (proton transporter activity). Proton transporter activity requires free fatty acids as cofactor, but does not transport it. Probably mediates mitochondrial uncoupling in tissues that do not express UCP1. Also plays a key role in mPTP opening, a non-specific pore that enables free passage of the mitochondrial membranes to solutes of up to 1.5 kDa, and which contributes to cell death. It is however unclear if SLC25A5/ANT2 constitutes a pore-forming component of mPTP or regulates it. Acts as a regulator of mitophagy independently of ADP:ATP antiporter activity: promotes mitophagy via interaction with TIMM44, leading to inhibit the presequence translocase TIMM23, thereby promoting stabilization of PINK1. As part of the mitotic spindle-associated MMXD complex it may play a role in chromosome segregation. In Rattus norvegicus (Rat), this protein is ADP/ATP translocase 2.